The sequence spans 319 residues: Pantothenate kinase (319 aa).

ATP is bound at residue 101–108 (GSVAVGKS).

It belongs to the prokaryotic pantothenate kinase family.

It is found in the cytoplasm. The catalysed reaction is (R)-pantothenate + ATP = (R)-4'-phosphopantothenate + ADP + H(+). Its pathway is cofactor biosynthesis; coenzyme A biosynthesis; CoA from (R)-pantothenate: step 1/5. This is Pantothenate kinase from Clavibacter sepedonicus (Clavibacter michiganensis subsp. sepedonicus).